Here is an 868-residue protein sequence, read N- to C-terminus: DNA mismatch repair protein MutS (868 aa).

Residue 620 to 627 (GPNMGGKS) participates in ATP binding.

Belongs to the DNA mismatch repair MutS family.

This protein is involved in the repair of mismatches in DNA. It is possible that it carries out the mismatch recognition step. This protein has a weak ATPase activity. The sequence is that of DNA mismatch repair protein MutS from Xylella fastidiosa (strain 9a5c).